Here is a 558-residue protein sequence, read N- to C-terminus: Phosphatidylserine lipase ABHD16A (558 aa).

2 consecutive transmembrane segments (helical) span residues 60-80 (ILAL…FAFF) and 93-113 (VVPF…VACL). The Cytoplasmic portion of the chain corresponds to 114–558 (RGIGRWTNPQ…AQNFQMPWHL (445 aa)). One can recognise an AB hydrolase-1 domain in the interval 281–407 (LVICCEGNAG…LVTRTVRQHL (127 aa)). Catalysis depends on charge relay system residues serine 355, aspartate 430, and histidine 507.

It belongs to the AB hydrolase superfamily. ABHD16 family.

It is found in the membrane. It catalyses the reaction 1-heptadecanoyl-2-(5Z,8Z,11Z,14Z-eicosatetraenoyl)-sn-glycero-3-phosphoserine + H2O = 1-heptadecanoyl-sn-glycero-3-phosphoserine + (5Z,8Z,11Z,14Z)-eicosatetraenoate + H(+). The catalysed reaction is 1-hexadecanoyl-2-(9Z-octadecenoyl)-sn-glycero-3-phospho-L-serine + H2O = 1-hexadecanoyl-sn-glycero-3-phospho-L-serine + (9Z)-octadecenoate + H(+). The enzyme catalyses 1-octadecanoyl-2-(9Z,12Z-octadecadienoyl)-sn-glycero-3-phosphoserine + H2O = 1-octadecanoyl-sn-glycero-3-phosphoserine + (9Z,12Z)-octadecadienoate + H(+). It carries out the reaction 1-heptadecanoyl-2-(5Z,8Z,11Z,14Z-eicosatetraenoyl)-sn-glycero-3-phosphocholine + H2O = 1-heptadecanoyl-sn-glycero-3-phosphocholine + (5Z,8Z,11Z,14Z)-eicosatetraenoate + H(+). It catalyses the reaction 1-hexadecanoyl-2-(9Z-octadecenoyl)-sn-glycero-3-phosphoglycerol + H2O = 1-hexadecanoyl-sn-glycero-3-phosphoglycerol + (9Z)-octadecenoate + H(+). The catalysed reaction is 1-hexadecanoyl-2-(9Z-octadecenoyl)-sn-glycero-3-phospho-(1D-myo-inositol) + H2O = 1-hexadecanoyl-sn-glycero-3-phospho-(1D-myo-inositol) + (9Z)-octadecenoate + H(+). The enzyme catalyses 1-heptadecanoyl-2-(5Z,8Z,11Z,14Z-eicosatetraenoyl)-sn-glycero-3-phosphoethanolamine + H2O = 1-heptadecanoyl-sn-glycero-3-phosphoethanolamine + (5Z,8Z,11Z,14Z)-eicosatetraenoate + H(+). It carries out the reaction 1-hexadecanoyl-2-(9Z-octadecenoyl)-sn-glycero-3-phospho-(1'-sn-glycerol) + H2O = 1-hexadecanoyl-sn-glycero-3-phospho-(1'-sn-glycerol) + (9Z)-octadecenoate + H(+). It catalyses the reaction Hydrolyzes glycerol monoesters of long-chain fatty acids.. The catalysed reaction is 1-tetradecanoylglycerol + H2O = tetradecanoate + glycerol + H(+). The enzyme catalyses 2-hexadecanoylglycerol + H2O = glycerol + hexadecanoate + H(+). It carries out the reaction 1-(9Z-octadecenoyl)-glycerol + H2O = glycerol + (9Z)-octadecenoate + H(+). It catalyses the reaction 2-(9Z-octadecenoyl)-glycerol + H2O = glycerol + (9Z)-octadecenoate + H(+). The catalysed reaction is 2-(9Z,12Z-octadecadienoyl)-glycerol + H2O = (9Z,12Z)-octadecadienoate + glycerol + H(+). The enzyme catalyses 1-(5Z,8Z,11Z,14Z-eicosatetraenoyl)-glycerol + H2O = glycerol + (5Z,8Z,11Z,14Z)-eicosatetraenoate + H(+). It carries out the reaction 2-(5Z,8Z,11Z,14Z-eicosatetraenoyl)-glycerol + H2O = glycerol + (5Z,8Z,11Z,14Z)-eicosatetraenoate + H(+). It catalyses the reaction prostaglandin D2-1-glycerol ester + H2O = prostaglandin D2 + glycerol + H(+). The catalysed reaction is 2-glyceryl-15-deoxy-Delta(12,14)-prostaglandin J2 + H2O = 15-deoxy-Delta(12,14)-prostaglandin J2 + glycerol + H(+). The enzyme catalyses 1-(9Z,12Z-octadecadienoyl)-glycerol + H2O = (9Z,12Z)-octadecadienoate + glycerol + H(+). In terms of biological role, phosphatidylserine (PS) lipase that mediates the hydrolysis of phosphatidylserine to generate lysophosphatidylserine (LPS). LPS constitutes a class of signaling lipids that regulates immunological and neurological processes. Has no activity towards diacylglycerol, triacylglycerol or lysophosphatidylserine lipase. Also has monoacylglycerol lipase activity, with preference for 1-(9Z,12Z-octadecadienoyl)-glycerol (1-LG) and 2-glyceryl-15-deoxy-Delta(12,14)-prostaglandin J2 (15d-PGJ(2)-G). In Bos taurus (Bovine), this protein is Phosphatidylserine lipase ABHD16A.